The chain runs to 150 residues: Lymphotoxin-beta (150 aa).

Residues 1 to 149 (AWITGQGLGW…GKTFFGAVMV (149 aa)) enclose the THD domain. An N-linked (GlcNAc...) asparagine glycan is attached at N128.

Belongs to the tumor necrosis factor family. In terms of assembly, heterotrimer of either two LTB and one LTA subunits or (less prevalent) two LTA and one LTB subunits.

The protein localises to the membrane. Its function is as follows. Cytokine that binds to LTBR/TNFRSF3. May play a specific role in immune response regulation. Provides the membrane anchor for the attachment of the heterotrimeric complex to the cell surface. This Sus scrofa (Pig) protein is Lymphotoxin-beta (LTB).